We begin with the raw amino-acid sequence, 467 residues long: Chlorophenol O-methyltransferase (467 aa).

The segment at 1–41 (MAELRAPSSLSTERNGSASNTDVDKQKLNHLYQNGNKKTGS) is disordered. 2 stretches are compositionally biased toward polar residues: residues 8–21 (SSLSTERNGSASNT) and 31–41 (LYQNGNKKTGS). Asp-320 is a binding site for S-adenosyl-L-methionine. The Proton acceptor role is filled by His-368.

The protein belongs to the class I-like SAM-binding methyltransferase superfamily. Cation-independent O-methyltransferase family.

The catalysed reaction is 2,4,6-trichlorophenol + S-adenosyl-L-methionine = 2,4,6-trichloroanisole + S-adenosyl-L-homocysteine. S-adenosyl-L-homocysteine acts as a competitive inhibitor. Also strongly inhibited by low concentrations of several metal ions, such as Cu(2+), Hg(2+), Zn(2+), and Ag(+), and to a lesser extent by p-chloromercuribenzoic acid, but it is not significantly affected by several thiols or other thiol reagents. Functionally, chlorophenol O-methyltransferase that methylates chlorophenols into chloroanisoles which are thought to be responsible for cork taint of wines. The only single chlorophenol (CP) methylated is 2-CP; neither 3-CP nor 4-CP are effective substrates. Within the dichlorophenols (DCPs), 2,4-DCP supports the highest rate of O-methylation, and the activity decreases in the following order: 2,3-DCP, 2,5-DCP, 2,6-DCP, and 3,4-DCP. Within the trichlorophenol (TCP) group, the maximal activity is observed with 2,3,4-TCP, whereas there is increasingly reduced activity with 2,4,5-TCP, 2,4,6-TCP, and 2,3,6-TCP. The only tetrachlorophenol (TeCP) that is methylated is 2,3,4,5-TeCP, since no activity can be detected with 2,3,4,6-TeCP and 2,3,5,6-TeCP. Is also able to methylate other halogenated phenols containing fluoro or bromo substituents, whereas other hydroxylated compounds, such as hydroxylated benzoic acids, hydroxybenzaldehydes, phenol, 2-metoxyphenol, and dihydroxybenzene, were not methylated. The sequence is that of Chlorophenol O-methyltransferase from Trichoderma longibrachiatum.